The sequence spans 508 residues: Transcriptional regulatory protein moc3 (508 aa).

Positions 15 to 43 (NRTGSINSNPLYIPNPNVEPTPKPTKRRT) are disordered. A DNA-binding region (zn(2)-C6 fungal-type) is located at residues 46 to 76 (GCLTCRRRRIKCDETKPFCLNCTKTNRECEG). 2 disordered regions span residues 110–146 (ASSS…STVT) and 174–193 (NHNV…KPSV). Over residues 176–193 (NVPTNNSSSATSSTKPSV) the composition is skewed to low complexity.

Interacts with zfs1.

The protein resides in the nucleus. In terms of biological role, induces sexual development and ascus formation. Also involved in calcium homeostasis. This Schizosaccharomyces pombe (strain 972 / ATCC 24843) (Fission yeast) protein is Transcriptional regulatory protein moc3 (moc3).